Here is a 218-residue protein sequence, read N- to C-terminus: Sodium channel regulatory subunit beta-1 (218 aa).

A signal peptide spans 1–18; it reads MGRLLAFVVGAALVSSAW. Over 19–157 the chain is Extracellular; the sequence is GGCVEVDSET…DKANRDMASI (139 aa). Cystine bridges form between Cys-21/Cys-43 and Cys-40/Cys-121. The 129-residue stretch at 22 to 150 folds into the Ig-like C2-type domain; sequence VEVDSETEAV…KIHLEVVDKA (129 aa). N-linked (GlcNAc...) asparagine glycosylation is found at Asn-93, Asn-110, Asn-114, and Asn-135. A helical membrane pass occupies residues 158 to 179; it reads VSEIMMYVLIVVLTIWLVAEMV. At 180–218 the chain is on the cytoplasmic side; sequence YCYKKIAAATEAAAQENASEYLAITSESKENCTGVQVAE.

Belongs to the sodium channel auxiliary subunit SCN1B (TC 8.A.17) family. As to quaternary structure, a voltage-gated sodium (Nav) channel consists of an ion-conducting pore-forming alpha subunit functional on its own that is regulated by one or more beta subunits. Interacts with SCN1A; regulatory subunit of SCN1A/Nav1.1. Interacts with SCN3A; regulatory subunit of SCN3A/Nav1.3. Interacts with SCN4A; regulatory subunit of SCN4A/Nav1.4. Interacts with SCN5A; regulatory subunit of SCN5A/Nav1.5. Interacts with SCN8A; regulatory subunit of SCN8A/Nav1.6. Interacts with SCN9A; regulatory subunit of SCN9A/Nav1.7. Interacts with SCN10A; regulatory subunit of SCN10A/Nav1.8. Interacts with NFASC. Interacts with TMEM65.

It localises to the cell membrane. The protein resides in the perikaryon. It is found in the cell projection. The protein localises to the axon. Regulatory subunit of multiple voltage-gated sodium (Nav) channels directly mediating the depolarization of excitable membranes. Navs, also called VGSCs (voltage-gated sodium channels) or VDSCs (voltage-dependent sodium channels), operate by switching between closed and open conformations depending on the voltage difference across the membrane. In the open conformation they allow Na(+) ions to selectively pass through the pore, along their electrochemical gradient. The influx of Na+ ions provokes membrane depolarization, initiating the propagation of electrical signals throughout cells and tissues. The accessory beta subunits participate in localization and functional modulation of the Nav channels. Modulates the activity of SCN1A/Nav1.1, SCN2A/Nav1.2, SCN3A/Nav1.3, SCN4A/Nav1.4, SCN5A/Nav1.5, SCN8A/Nav1.6, SCN9A/Nav1.7 and SCN10A/Nav1.8. The chain is Sodium channel regulatory subunit beta-1 from Oryctolagus cuniculus (Rabbit).